Consider the following 392-residue polypeptide: L-rhamnonate dehydratase (392 aa).

Residues H22 and R48 each coordinate substrate. D214, E240, and E268 together coordinate Mg(2+). The active-site Proton acceptor is the H318. E338 contacts substrate.

It belongs to the mandelate racemase/muconate lactonizing enzyme family. RhamD subfamily. Homooctamer; tetramer of dimers. Requires Mg(2+) as cofactor.

It catalyses the reaction L-rhamnonate = 2-dehydro-3-deoxy-L-rhamnonate + H2O. Its function is as follows. Catalyzes the dehydration of L-rhamnonate to 2-keto-3-deoxy-L-rhamnonate (KDR). The polypeptide is L-rhamnonate dehydratase (Burkholderia ambifaria (strain MC40-6)).